Here is a 154-residue protein sequence, read N- to C-terminus: Myoglobin (154 aa).

The 147-residue stretch at 2–148 folds into the Globin domain; that stretch reads GLSDGEWQLV…FRKDMASNYK (147 aa). At S4 the chain carries Phosphoserine. H65 serves as a coordination point for nitrite. H65 contributes to the O2 binding site. T68 carries the post-translational modification Phosphothreonine. H94 contacts heme b.

This sequence belongs to the globin family. Monomeric.

The protein localises to the cytoplasm. Its subcellular location is the sarcoplasm. The catalysed reaction is Fe(III)-heme b-[protein] + nitric oxide + H2O = Fe(II)-heme b-[protein] + nitrite + 2 H(+). The enzyme catalyses H2O2 + AH2 = A + 2 H2O. Its function is as follows. Monomeric heme protein which primary function is to store oxygen and facilitate its diffusion within muscle tissues. Reversibly binds oxygen through a pentacoordinated heme iron and enables its timely and efficient release as needed during periods of heightened demand. Depending on the oxidative conditions of tissues and cells, and in addition to its ability to bind oxygen, it also has a nitrite reductase activity whereby it regulates the production of bioactive nitric oxide. Under stress conditions, like hypoxia and anoxia, it also protects cells against reactive oxygen species thanks to its pseudoperoxidase activity. The chain is Myoglobin (MB) from Pongo pygmaeus (Bornean orangutan).